Here is a 116-residue protein sequence, read N- to C-terminus: Cation channel sperm-associated auxiliary subunit TMEM262 (116 aa).

Residues 1-16 (MRWRDRIAVLCFPPGL) are Cytoplasmic-facing. A helical membrane pass occupies residues 17 to 38 (MLTVAALILFFIHMGVFASDVH). Residues 39–51 (NFCVIHNYDHMSF) are Extracellular-facing. A helical membrane pass occupies residues 52-72 (RYTVVLIFSQVISIGWAAMGS). The Cytoplasmic portion of the chain corresponds to 73-84 (LYAEMTGDKFLR). The helical transmembrane segment at 85–107 (CFALTILILNGAMFFNRLCLEFL) threads the bilayer. Over 108–116 (AINYREERH) the chain is Extracellular.

Component of the CatSper complex or CatSpermasome composed of the core pore-forming members CATSPER1, CATSPER2, CATSPER3 and CATSPER4 as well as auxiliary members CATSPERB, CATSPERG, CATSPERD, CATSPERE, CATSPERZ, C2CD6/CATSPERT, SLCO6C1, TMEM249, TMEM262 and EFCAB9. HSPA1 may be an additional auxiliary complex member. The core complex members CATSPER1, CATSPER2, CATSPER3 and CATSPER4 form a heterotetrameric channel. The auxiliary CATSPERB, CATSPERG2, CATSPERD and CATSPERE subunits form a pavilion-like structure over the pore which stabilizes the complex through interactions with CATSPER4, CATSPER3, CATSPER1 and CATSPER2 respectively. SLCO6C1 interacts with CATSPERE and TMEM262/CATSPERH interacts with CATSPERB, further stabilizing the complex. C2CD6/CATSPERT interacts at least with CATSPERD and is required for targeting the CatSper complex in the flagellar membrane.

The protein resides in the cell projection. It is found in the cilium. It localises to the flagellum membrane. Functionally, auxiliary component of the CatSper complex, a complex involved in sperm cell hyperactivation. In Mus musculus (Mouse), this protein is Cation channel sperm-associated auxiliary subunit TMEM262.